A 201-amino-acid polypeptide reads, in one-letter code: B-cell CLL/lymphoma 7 protein family member B-B (201 aa).

The interval 104–201 is disordered; that stretch reads QSNTKVDSSS…VCTEHNSTVS (98 aa).

Belongs to the BCL7 family.

This Danio rerio (Zebrafish) protein is B-cell CLL/lymphoma 7 protein family member B-B.